The primary structure comprises 134 residues: Salivary protein 15 Iric-1 (134 aa).

The first 21 residues, 1–21, serve as a signal peptide directing secretion; sequence MESFVAMKVVCITVLFVIVAV. N-linked (GlcNAc...) asparagine glycosylation occurs at asparagine 22. Residues 48–67 are required for Borrelia OspC-binding; it reads PSYIRNPQKLALELLEICKN. Asparagine 91 and asparagine 103 each carry an N-linked (GlcNAc...) asparagine glycan. The CD4-binding stretch occupies residues 115-134; sequence GPNGETCAEKSKCVGHIPGC.

It belongs to the salp15 family. In terms of assembly, monomer. Interacts with host CD4. Interacts with host DC-SIGN (CD209). (Microbial infection) Interacts with Borrelia outer surface protein C (OspC). As to expression, expressed in salivary glands. Detected in fed adult female.

The protein resides in the secreted. In terms of biological role, salivary tick protein that downregulates host immune system by binding to both dendritic cells, and CD4(+) T cells. Specifically binds to the CD4 coreceptor on T cells. This interaction prevents the activation of the Src kinase, Lck, and its downstream substrate Zap-70, and results in deficient activation of PLCgamma1, the repression of calcium fluxes triggered by T-cell antigen receptor (TCR) ligation, and a subsequent reduction in interleukin-2 production. This salivary protein also binds to DC-SIGN (CD209) on dendritic cells (DC) and activates the Raf-1 kinase/MEK signaling pathway that results in down-regulating expression of pro-inflammatory cytokines. Furthermore, it inhibits T cell proliferation induced by DCs. In addition, it inhibits in vitro keratinocyte inflammation induced by Borrelia burgdorferi or by the major outer surface protein (OspC) of Borrelia. In addition, it downregulates chemokines and monocyte chemoattractant protein 1, as well as several antimicrobial peptides such as defensins, cathelicidin, psoriasin, and RNase 7. Apart from its immunomodulatory activities, it is also associated with protection of Borrelia spirochetes from antibody-mediated killing through its binding to OspC. In vivo, tests on different immune disease animal models show promising therapeutic results, e.g., in inhibiting HIV infection, experimental autoimmune encephalomyelitis, transplantation rejection, and asthma. Functionally, (Microbial infection) Protects Borrelia garinii (strain VSBP) from host complement-mediated killing by binding to the surface of spirochetes and preventing deposition of host C5b-9 membrane attack complexes. Protects Borrelia garinii (strain A87S) from host complement-mediated killing. (Microbial infection) Partially protects Borrelia burgdorferi (strains VS215 and B31) from host complement-mediated killing. The protein is Salivary protein 15 Iric-1 of Ixodes ricinus (Common tick).